A 113-amino-acid chain; its full sequence is Integration host factor subunit alpha (113 aa).

A disordered region spans residues 87–113 (NALNGEVSDETTEGADDDDDEEGEGDE). The segment covering 93–113 (VSDETTEGADDDDDEEGEGDE) has biased composition (acidic residues).

Belongs to the bacterial histone-like protein family. As to quaternary structure, heterodimer of an alpha and a beta chain.

In terms of biological role, this protein is one of the two subunits of integration host factor, a specific DNA-binding protein that functions in genetic recombination as well as in transcriptional and translational control. The chain is Integration host factor subunit alpha from Anaeromyxobacter dehalogenans (strain 2CP-1 / ATCC BAA-258).